The following is a 372-amino-acid chain: uncharacterized protein (372 aa).

The interval 49–72 (FSHKGGGKGGGSGAGSNDGGCSGE) is disordered. The segment covering 55 to 70 (GKGGGSGAGSNDGGCS) has biased composition (gly residues).

This is an uncharacterized protein from Halorubrum lacusprofundi (strain ATCC 49239 / DSM 5036 / JCM 8891 / ACAM 34).